The primary structure comprises 1960 residues: Zinc finger protein 638 (1960 aa).

A disordered region spans residues 1 to 137; sequence MSRPRFNPRG…SPKVQSRYTK (137 aa). A compositionally biased stretch (pro residues) spans 19–31; the sequence is APNPPGMRPPGPF. 3 positions are modified to asymmetric dimethylarginine: R47, R49, and R54. Residues 60-75 are compositionally biased toward polar residues; sequence SYQNMGPQRMNVQVTQ. The span at 76-89 shows a compositional bias: basic and acidic residues; the sequence is HRTDPRLTKEKLDF. A compositionally biased stretch (polar residues) spans 117–137; it reads KQSSVTQVTEQSPKVQSRYTK. A phosphoserine mark is found at S128 and S288. K291 participates in a covalent cross-link: Glycyl lysine isopeptide (Lys-Gly) (interchain with G-Cter in SUMO2). Residues S298, S367, S381, and S418 each carry the phosphoserine modification. Positions 352 to 373 are disordered; sequence KSVISSADAHGGPTESKKDYQS. Disordered regions lie at residues 463–673, 749–804, and 827–899; these read NPEI…QSLS, PGKK…STVK, and KASI…KESE. The span at 468-483 shows a compositional bias: basic and acidic residues; it reads PSRRNESNRKENETPR. The involved in localization to nuclear speckles stretch occupies residues 470–573; that stretch reads RRNESNRKEN…ERTSRKSVRS (104 aa). A compositionally biased stretch (basic residues) spans 484-556; that stretch reads RRSHSPSPRH…SRNLLRRSPK (73 aa). Residue S554 is modified to Phosphoserine. 2 stretches are compositionally biased toward basic and acidic residues: residues 565 to 583 and 591 to 602; these read RTSR…EDGG and EVTKQKHTETVD. 2 positions are modified to phosphoserine: S606 and S615. A compositionally biased stretch (low complexity) spans 618-628; that stretch reads KPSAKSLSSVK. Position 637 is a phosphoserine (S637). Residues 676 to 751 form the RRM 1 domain; the sequence is SILLVSELPE…KSVKVCVPGK (76 aa). A compositionally biased stretch (basic and acidic residues) spans 755–782; sequence QNKEMKKKPSDIKKSSASALKKETDASK. K775 participates in a covalent cross-link: Glycyl lysine isopeptide (Lys-Gly) (interchain with G-Cter in SUMO2). Residues 783–802 are compositionally biased toward low complexity; sequence TMETVSSSSSAKSGQIKSST. 3 stretches are compositionally biased toward basic and acidic residues: residues 838 to 854, 867 to 879, and 888 to 899; these read KSLE…KDSN, ASSE…KSAE, and ATEKEPVNKESE. The 75-residue stretch at 902–976 folds into the RRM 2 domain; it reads SVVFISNLPN…NQLSISMAPE (75 aa). A compositionally biased stretch (basic and acidic residues) spans 1082-1092; the sequence is SEVQRKNDLEL. Disordered regions lie at residues 1082–1151, 1396–1420, 1442–1462, 1484–1527, and 1550–1583; these read SEVQ…EEPK, TVVS…PKPV, TRSG…GVNR, TKQS…KSKE, and PSQA…KGKT. S1099 carries the phosphoserine modification. Residues 1140-1151 show a composition bias toward basic and acidic residues; the sequence is VHQEELGKEEPK. Positions 1399–1409 are enriched in low complexity; sequence SSPKAKSTPSK. Phosphoserine is present on S1400. Polar residues predominate over residues 1442-1459; that stretch reads TRSGLAESNSKSKPTQIG. Basic and acidic residues-rich tracts occupy residues 1484–1503 and 1518–1527; these read TKQS…DDSN and TTDRSSKSKE. A phosphoserine mark is found at S1635 and S1661. 2 disordered regions span residues 1763–1898 and 1930–1960; these read EVGD…SDVP and KSTR…RSSR. The segment covering 1772 to 1790 has biased composition (basic and acidic residues); that stretch reads NDSKVELARGKIEHHTDKK. Residue K1804 forms a Glycyl lysine isopeptide (Lys-Gly) (interchain with G-Cter in SUMO2) linkage. Residues 1806–1818 are compositionally biased toward polar residues; it reads DSFSQVGPGSETV. A compositionally biased stretch (basic and acidic residues) spans 1819-1831; the sequence is TQKDLKTMPERHL. S1864 carries the phosphoserine modification. Basic and acidic residues predominate over residues 1870–1885; the sequence is AELKDSEPDEKRRKTQ. The Matrin-type zinc-finger motif lies at 1876 to 1906; sequence EPDEKRRKTQDSSVGKSMTSDVPGDLDFLVP. Over residues 1886-1895 the composition is skewed to polar residues; the sequence is DSSVGKSMTS. A compositionally biased stretch (basic and acidic residues) spans 1936 to 1960; the sequence is QNTEKFMAKQRKEKEQNETEERSSR.

As to quaternary structure, interacts with FHL2. Interacts with CEBPA, CEBPD and CEBPG. Interacts with MPHOSPH8 and TASOR components of the HUSH complex; leading to recruitment of the HUSH complex. Interacts with SETDB1. Interacts with HDAC1. Interacts with HDAC4.

It is found in the nucleus speckle. Transcription factor that binds to cytidine clusters in double-stranded DNA. Plays a key role in the silencing of unintegrated retroviral DNA: some part of the retroviral DNA formed immediately after infection remains unintegrated in the host genome and is transcriptionally repressed. Mediates transcriptional repression of unintegrated viral DNA by specifically binding to the cytidine clusters of retroviral DNA and mediating the recruitment of chromatin silencers, such as the HUSH complex, SETDB1 and the histone deacetylases HDAC1 and HDAC4. Acts as an early regulator of adipogenesis by acting as a transcription cofactor of CEBPs (CEBPA, CEBPD and/or CEBPG), controlling the expression of PPARG and probably of other proadipogenic genes, such as SREBF1. May also regulate alternative splicing of target genes during adipogenesis. The polypeptide is Zinc finger protein 638 (Mus musculus (Mouse)).